Consider the following 287-residue polypeptide: Ciliary microtubule inner protein 6 (287 aa).

Basic and acidic residues-rich tracts occupy residues 1–15 (MEEK…KIED) and 25–34 (EEIKHEEKPG). The disordered stretch occupies residues 1-42 (MEEKEDKHQQHKIEDAAITYVSENEEIKHEEKPGKSIHHSKS). A mn 1 region spans residues 128–160 (GIVPLASPGTSAELQNNFIEYISFIHQYDARKT). A disordered region spans residues 179 to 287 (KPGSRPTVPK…PLNPPIKKSE (109 aa)). 2 stretches are compositionally biased toward basic and acidic residues: residues 203-212 (EQSKKTEKGN) and 232-245 (LEPK…DVRQ). Positions 213-246 (SAESRMISPGLCQQNSQELLEPKTHLSETDVRQA) are mn 2.

Its subcellular location is the cell projection. The protein resides in the cilium. In Homo sapiens (Human), this protein is Ciliary microtubule inner protein 6.